The sequence spans 520 residues: Peptide chain release factor 3 (520 aa).

A tr-type G domain is found at Glu8–Thr277. GTP-binding positions include Ser17–Thr24, Asp85–His89, and Asn139–Asp142.

Belongs to the TRAFAC class translation factor GTPase superfamily. Classic translation factor GTPase family. PrfC subfamily.

It is found in the cytoplasm. In terms of biological role, increases the formation of ribosomal termination complexes and stimulates activities of RF-1 and RF-2. It binds guanine nucleotides and has strong preference for UGA stop codons. It may interact directly with the ribosome. The stimulation of RF-1 and RF-2 is significantly reduced by GTP and GDP, but not by GMP. The sequence is that of Peptide chain release factor 3 from Staphylococcus saprophyticus subsp. saprophyticus (strain ATCC 15305 / DSM 20229 / NCIMB 8711 / NCTC 7292 / S-41).